The sequence spans 504 residues: Calcium/calmodulin-dependent protein kinase type II (504 aa).

Residues Y65–I351 enclose the Protein kinase domain. ATP is bound by residues L71–V79 and K94. The active-site Proton acceptor is D188. A Phosphothreonine modification is found at T252.

The protein belongs to the protein kinase superfamily. CAMK Ser/Thr protein kinase family. CaMK subfamily. Interacts with sty1. Mg(2+) serves as cofactor. Autophosphorylated.

It is found in the cytoplasm. The protein resides in the barrier septum. The protein localises to the forespore membrane. It localises to the ascus epiplasm. The catalysed reaction is L-seryl-[protein] + ATP = O-phospho-L-seryl-[protein] + ADP + H(+). The enzyme catalyses L-threonyl-[protein] + ATP = O-phospho-L-threonyl-[protein] + ADP + H(+). Has a role in the regulation of G2/M transition during the mitotic cell cycle. In Schizosaccharomyces pombe (strain 972 / ATCC 24843) (Fission yeast), this protein is Calcium/calmodulin-dependent protein kinase type II.